Here is a 662-residue protein sequence, read N- to C-terminus: UvrABC system protein B (662 aa).

The Helicase ATP-binding domain occupies 25–414; that stretch reads TGLNSKKRSQ…GTVVELIIRP (390 aa). 38–45 is a binding site for ATP; it reads GITGSGKT. A Beta-hairpin motif is present at residues 91–114; the sequence is YYDYYQPESYIVRTDTFIEKDSSI. In terms of domain architecture, Helicase C-terminal spans 430 to 592; it reads QVEDLISEIQ…IIPKTINRAI (163 aa). In terms of domain architecture, UVR spans 622 to 657; the sequence is KAHMDKLKKEMFKAASNLEFEQAAKLRNQLKALEEA.

The protein belongs to the UvrB family. As to quaternary structure, forms a heterotetramer with UvrA during the search for lesions. Interacts with UvrC in an incision complex.

It is found in the cytoplasm. In terms of biological role, the UvrABC repair system catalyzes the recognition and processing of DNA lesions. A damage recognition complex composed of 2 UvrA and 2 UvrB subunits scans DNA for abnormalities. Upon binding of the UvrA(2)B(2) complex to a putative damaged site, the DNA wraps around one UvrB monomer. DNA wrap is dependent on ATP binding by UvrB and probably causes local melting of the DNA helix, facilitating insertion of UvrB beta-hairpin between the DNA strands. Then UvrB probes one DNA strand for the presence of a lesion. If a lesion is found the UvrA subunits dissociate and the UvrB-DNA preincision complex is formed. This complex is subsequently bound by UvrC and the second UvrB is released. If no lesion is found, the DNA wraps around the other UvrB subunit that will check the other stand for damage. This chain is UvrABC system protein B, found in Rickettsia prowazekii (strain Madrid E).